A 502-amino-acid polypeptide reads, in one-letter code: Aspartyl/glutamyl-tRNA(Asn/Gln) amidotransferase subunit B (502 aa).

The protein belongs to the GatB/GatE family. GatB subfamily. Heterotrimer of A, B and C subunits.

The enzyme catalyses L-glutamyl-tRNA(Gln) + L-glutamine + ATP + H2O = L-glutaminyl-tRNA(Gln) + L-glutamate + ADP + phosphate + H(+). It catalyses the reaction L-aspartyl-tRNA(Asn) + L-glutamine + ATP + H2O = L-asparaginyl-tRNA(Asn) + L-glutamate + ADP + phosphate + 2 H(+). Its function is as follows. Allows the formation of correctly charged Asn-tRNA(Asn) or Gln-tRNA(Gln) through the transamidation of misacylated Asp-tRNA(Asn) or Glu-tRNA(Gln) in organisms which lack either or both of asparaginyl-tRNA or glutaminyl-tRNA synthetases. The reaction takes place in the presence of glutamine and ATP through an activated phospho-Asp-tRNA(Asn) or phospho-Glu-tRNA(Gln). This Arthrobacter sp. (strain FB24) protein is Aspartyl/glutamyl-tRNA(Asn/Gln) amidotransferase subunit B.